Reading from the N-terminus, the 310-residue chain is Acetylglutamate kinase (310 aa).

Residues 83–84 (GG), Arg-105, and Asn-207 each bind substrate.

This sequence belongs to the acetylglutamate kinase family. ArgB subfamily.

It localises to the cytoplasm. The enzyme catalyses N-acetyl-L-glutamate + ATP = N-acetyl-L-glutamyl 5-phosphate + ADP. Its pathway is amino-acid biosynthesis; L-arginine biosynthesis; N(2)-acetyl-L-ornithine from L-glutamate: step 2/4. Its function is as follows. Catalyzes the ATP-dependent phosphorylation of N-acetyl-L-glutamate. The protein is Acetylglutamate kinase of Ralstonia nicotianae (strain ATCC BAA-1114 / GMI1000) (Ralstonia solanacearum).